Consider the following 155-residue polypeptide: RNA pyrophosphohydrolase (155 aa).

The Nudix hydrolase domain occupies Lys5–Ala147. The short motif at Gly42 to Gly63 is the Nudix box element.

This sequence belongs to the Nudix hydrolase family. RppH subfamily. It depends on a divalent metal cation as a cofactor.

Its function is as follows. Accelerates the degradation of transcripts by removing pyrophosphate from the 5'-end of triphosphorylated RNA, leading to a more labile monophosphorylated state that can stimulate subsequent ribonuclease cleavage. The polypeptide is RNA pyrophosphohydrolase (Helicobacter pylori (strain G27)).